The sequence spans 368 residues: tRNA(Met) cytidine acetate ligase (368 aa).

ATP-binding positions include 7–20 (IAEFNPFHNGHKYL), G96, N152, and R175.

It belongs to the TmcAL family.

Its subcellular location is the cytoplasm. It carries out the reaction cytidine(34) in elongator tRNA(Met) + acetate + ATP = N(4)-acetylcytidine(34) in elongator tRNA(Met) + AMP + diphosphate. In terms of biological role, catalyzes the formation of N(4)-acetylcytidine (ac(4)C) at the wobble position of elongator tRNA(Met), using acetate and ATP as substrates. First activates an acetate ion to form acetyladenylate (Ac-AMP) and then transfers the acetyl group to tRNA to form ac(4)C34. The polypeptide is tRNA(Met) cytidine acetate ligase (Streptococcus pyogenes serotype M3 (strain SSI-1)).